The chain runs to 1184 residues: DNA-directed RNA polymerase subunit beta (1184 aa).

The segment at 1160–1184 (DDDFTNQNDAFNIVQPENAAAEKTE) is disordered.

This sequence belongs to the RNA polymerase beta chain family. The RNAP catalytic core consists of 2 alpha, 1 beta, 1 beta' and 1 omega subunit. When a sigma factor is associated with the core the holoenzyme is formed, which can initiate transcription.

It catalyses the reaction RNA(n) + a ribonucleoside 5'-triphosphate = RNA(n+1) + diphosphate. Its function is as follows. DNA-dependent RNA polymerase catalyzes the transcription of DNA into RNA using the four ribonucleoside triphosphates as substrates. The polypeptide is DNA-directed RNA polymerase subunit beta (Listeria monocytogenes serotype 4b (strain F2365)).